A 98-amino-acid chain; its full sequence is MSSDDKSKSNDPKTEPKNCDPKCEQKCESKCQPSCLKKLLQRCFEKCPWEKCPAPPKCLPCPSQSPSSCPPQPCTKPCPPKCPSSCPHACPPPCPPPE.

Positions 1–26 (MSSDDKSKSNDPKTEPKNCDPKCEQK) are disordered.

The protein belongs to the cornifin (SPRR) family.

The chain is Late cornified envelope-like proline-rich protein 1 (LELP1) from Homo sapiens (Human).